The following is a 190-amino-acid chain: UPF0301 protein RSc0675 (190 aa).

It belongs to the UPF0301 (AlgH) family.

This is UPF0301 protein RSc0675 from Ralstonia nicotianae (strain ATCC BAA-1114 / GMI1000) (Ralstonia solanacearum).